A 449-amino-acid polypeptide reads, in one-letter code: Exodeoxyribonuclease 7 large subunit (449 aa).

It belongs to the XseA family. In terms of assembly, heterooligomer composed of large and small subunits.

It is found in the cytoplasm. The enzyme catalyses Exonucleolytic cleavage in either 5'- to 3'- or 3'- to 5'-direction to yield nucleoside 5'-phosphates.. Functionally, bidirectionally degrades single-stranded DNA into large acid-insoluble oligonucleotides, which are then degraded further into small acid-soluble oligonucleotides. This chain is Exodeoxyribonuclease 7 large subunit, found in Salmonella typhimurium (strain LT2 / SGSC1412 / ATCC 700720).